The following is a 766-amino-acid chain: NADH-dependent flavin oxidoreductase iliE (766 aa).

Over residues 1-13 the composition is skewed to polar residues; sequence MSEQLGSHITTPS. The disordered stretch occupies residues 1-24; sequence MSEQLGSHITTPSSHDDASKDKRP. Residues 14-24 show a composition bias toward basic and acidic residues; the sequence is SHDDASKDKRP. The N-linked (GlcNAc...) asparagine glycan is linked to N30. 61 to 64 is a binding site for FMN; it reads AATA. Residues N70 and N136 are each glycosylated (N-linked (GlcNAc...) asparagine). Q143 contributes to the FMN binding site. Position 224–227 (224–227) interacts with substrate; that stretch reads HAGH. 385–386 contacts FMN; the sequence is AR. One can recognise a J domain in the interval 551-622; it reads TPYDILAMRK…SKRSLYDTQG (72 aa). Residues N634, N650, and N654 are each glycosylated (N-linked (GlcNAc...) asparagine). Residues 675–695 form a helical membrane-spanning segment; it reads MYMSNGVFATLVVMMCMIGAF.

Belongs to the NADH:flavin oxidoreductase/NADH oxidase family.

The protein localises to the membrane. Its function is as follows. NADH-dependent flavin oxidoreductase; part of the gene cluster that mediates the biosynthesis of ilicicolin H, a 4-hydroxy-2-pyridonealkaloid that has potent and broad antifungal activities by inhibiting the mitochondrial respiration chain. The biosynthesis of ilicicolin H starts with formation of the tetramic acid by the hybrid PKS-NRPS synthetase iliA with the partnering trans-enoyl reductase iliB since iliA lacks a designated enoylreductase (ER) domain. The cytochrome P450 monooxygenase iliC then catalyzes the ring expansion of the tetramate to the acyclic 2-pyridone. The pericyclase iliD further converts the acyclic 2-pyridone into 8-epi-ilicicolin H. 8-epi-ilicicolin H might then spontaneously convert to ilicicolin H since ilicicolin H is produced in the absence of the epimerase iliE, in contrast to what was observed for the Talaromyces variabilis ilicolin H biosynthetic pathway. In Neonectria sp. (strain DH2), this protein is NADH-dependent flavin oxidoreductase iliE.